The sequence spans 902 residues: 26S proteasome regulatory subunit rpn-1 (902 aa).

Over residues 1 to 41 (MAQESDLSKTADKGKGKAVDDEKKHQDVDGKTPANGKKEEE) the composition is skewed to basic and acidic residues. Residues 1–54 (MAQESDLSKTADKGKGKAVDDEKKHQDVDGKTPANGKKEEEQNASEELSEEDQQ) are disordered. The span at 42–52 (QNASEELSEED) shows a compositional bias: acidic residues. PC repeat units follow at residues 415–448 (STVA…QIQA), 449–487 (GAYL…LIRV), 488–522 (ATIM…SMQV), 525–559 (MAAL…GSRL), 568–601 (ALGL…KPTA), 645–680 (AVLG…NIRR), 681–715 (AVPL…EVAI), and 716–750 (NAIF…DQES).

It belongs to the proteasome subunit S2 family.

Acts as a regulatory subunit of the 26 proteasome which is involved in the ATP-dependent degradation of ubiquitinated proteins. This Neurospora crassa (strain ATCC 24698 / 74-OR23-1A / CBS 708.71 / DSM 1257 / FGSC 987) protein is 26S proteasome regulatory subunit rpn-1 (rpn-1).